The chain runs to 394 residues: Phosphoglycerate kinase (394 aa).

Substrate contacts are provided by residues 21-23, Arg36, 59-62, Arg118, and Arg151; these read DFN and HLGR. A Phosphoserine modification is found at Ser183. Lys201 and Gly292 together coordinate ATP. A Phosphothreonine modification is found at Thr299. ATP is bound by residues Glu323 and 350–353; that span reads GGDS.

This sequence belongs to the phosphoglycerate kinase family. As to quaternary structure, monomer.

Its subcellular location is the cytoplasm. It catalyses the reaction (2R)-3-phosphoglycerate + ATP = (2R)-3-phospho-glyceroyl phosphate + ADP. It functions in the pathway carbohydrate degradation; glycolysis; pyruvate from D-glyceraldehyde 3-phosphate: step 2/5. The polypeptide is Phosphoglycerate kinase (Bacillus cereus (strain ATCC 10987 / NRS 248)).